A 346-amino-acid chain; its full sequence is Iron uptake protein A2 (346 aa).

The segment at residues 1–31 (MTTKISRRTFFVGGTALTALVVANLPRRASA) is a signal peptide (tat-type signal). Fe cation contacts are provided by His-43, Tyr-44, Tyr-169, Tyr-225, and Tyr-226.

The protein belongs to the bacterial solute-binding protein 1 family. Predicted to be exported by the Tat system. The position of the signal peptide cleavage has not been experimentally proven.

It is found in the cellular thylakoid membrane. Its subcellular location is the periplasm. Probably part of a periplasmic ABC transporter complex futA1A2BC (TC 3.A.1.10.2) involved in Fe(3+) ion import (ferric iron). This protein and futA1 (slr1295) are subunit proteins that have redundant or overlapping substrate-binding functions. The differing subcellular locations of futA1 (predominantly thylakoid lumen) and futA2 (predominantly periplasmic) suggest they may fulfill different roles. In terms of biological role, plays an important role in protecting the acceptor side of photosystem II (PSII) against oxidative damage, especially under iron-limiting growth conditions. Functionally, plays an undefined role in copper supply to thylakoid proteins. The sequence is that of Iron uptake protein A2 (futA2) from Synechocystis sp. (strain ATCC 27184 / PCC 6803 / Kazusa).